We begin with the raw amino-acid sequence, 209 residues long: Outer-membrane lipoprotein carrier protein (209 aa).

Residues Met1–Ala23 form the signal peptide.

This sequence belongs to the LolA family. In terms of assembly, monomer.

It localises to the periplasm. In terms of biological role, participates in the translocation of lipoproteins from the inner membrane to the outer membrane. Only forms a complex with a lipoprotein if the residue after the N-terminal Cys is not an aspartate (The Asp acts as a targeting signal to indicate that the lipoprotein should stay in the inner membrane). The sequence is that of Outer-membrane lipoprotein carrier protein from Glaesserella parasuis serovar 5 (strain SH0165) (Haemophilus parasuis).